The following is a 299-amino-acid chain: uncharacterized protein (299 aa).

Active-site charge relay system residues include Thr-47 and Tyr-109. The active-site Proton donor is the Tyr-138. Residue Lys-168 is the Schiff-base intermediate with substrate of the active site.

This sequence belongs to the DapA family. As to quaternary structure, homotetramer.

It localises to the cytoplasm. This is an uncharacterized protein from Chloroflexus aurantiacus (strain ATCC 29366 / DSM 635 / J-10-fl).